The primary structure comprises 93 residues: Small ribosomal subunit protein uS19 (93 aa).

This sequence belongs to the universal ribosomal protein uS19 family.

Functionally, protein S19 forms a complex with S13 that binds strongly to the 16S ribosomal RNA. The sequence is that of Small ribosomal subunit protein uS19 from Symbiobacterium thermophilum (strain DSM 24528 / JCM 14929 / IAM 14863 / T).